Consider the following 635-residue polypeptide: Probable clathrin assembly protein At4g32285 (635 aa).

The 137-residue stretch at 23 to 159 (VASNMAPDLE…ELALFERRGR (137 aa)) folds into the ENTH domain. The segment at 157 to 208 (RGRNGGGSSSSHQSNGDDGYNRSRDDFRSPPPRTYDYETGNGFGMPKRSRSF) is disordered. Over residues 165–174 (SSSHQSNGDD) the composition is skewed to low complexity. Basic and acidic residues predominate over residues 175 to 184 (GYNRSRDDFR). Residue serine 207 is modified to Phosphoserine. Threonine 224 carries the post-translational modification Phosphothreonine. Positions 357 to 369 (AKRAKSPERKEIE) are enriched in basic and acidic residues. A disordered region spans residues 357 to 412 (AKRAKSPERKEIEAPPAPAPPVEEPVDMNEIKALPPPENHTPPPPPAPEPKPQQPQ). Residues 390–409 (LPPPENHTPPPPPAPEPKPQ) show a composition bias toward pro residues.

It is found in the membrane. Its subcellular location is the clathrin-coated pit. It localises to the golgi apparatus. The protein resides in the cytoplasmic vesicle. The protein localises to the clathrin-coated vesicle. The sequence is that of Probable clathrin assembly protein At4g32285 from Arabidopsis thaliana (Mouse-ear cress).